The sequence spans 347 residues: NADH-ubiquinone oxidoreductase chain 2 (347 aa).

A run of 11 helical transmembrane segments spans residues 1 to 21 (MNPLAQPIIYSTIFAGTLITA), 25 to 45 (HWFLAWVGLEMNMLAFIPVLT), 55 to 75 (AAIKYFLVQATASMILMMAIL), 96 to 116 (LMILTALAMKLGMAPFHFWVP), 123 to 143 (TLTSGLLLLTWQKLAPISIMY), 145 to 165 (IFPVMNVNILLTFSILSIMVG), 178 to 198 (ILAYSSITHVGWMTAVLPYNP), 199 to 219 (NITIFNLTIYIVLTTTAFLAL), 237 to 257 (LTWLLPLIPSTLLSLGGLPPL), 274 to 294 (GTLIIPTIMAIVTLINLYFYM), and 324 to 344 (LLLPTLTILTTLLLPIAPLTF).

Belongs to the complex I subunit 2 family. As to quaternary structure, core subunit of respiratory chain NADH dehydrogenase (Complex I) which is composed of 45 different subunits. Interacts with TMEM242.

It localises to the mitochondrion inner membrane. It carries out the reaction a ubiquinone + NADH + 5 H(+)(in) = a ubiquinol + NAD(+) + 4 H(+)(out). Its function is as follows. Core subunit of the mitochondrial membrane respiratory chain NADH dehydrogenase (Complex I) which catalyzes electron transfer from NADH through the respiratory chain, using ubiquinone as an electron acceptor. Essential for the catalytic activity and assembly of complex I. In Symphalangus syndactylus (Siamang), this protein is NADH-ubiquinone oxidoreductase chain 2.